A 381-amino-acid polypeptide reads, in one-letter code: Orotidine 5'-phosphate decarboxylase (381 aa).

Substrate-binding positions include aspartate 42, 64 to 66, 99 to 108, tyrosine 333, and arginine 352; these read KTH and DRKFGDIGHT. Lysine 101 acts as the Proton donor in catalysis. The segment at 311-333 is disordered; sequence LPPEDEDQQTNGSVGGDGQGQQY.

Belongs to the OMP decarboxylase family.

The enzyme catalyses orotidine 5'-phosphate + H(+) = UMP + CO2. It functions in the pathway pyrimidine metabolism; UMP biosynthesis via de novo pathway; UMP from orotate: step 2/2. The sequence is that of Orotidine 5'-phosphate decarboxylase (ura3) from Hypocrea jecorina (Trichoderma reesei).